The sequence spans 158 residues: SsrA-binding protein (158 aa).

Belongs to the SmpB family.

It is found in the cytoplasm. Required for rescue of stalled ribosomes mediated by trans-translation. Binds to transfer-messenger RNA (tmRNA), required for stable association of tmRNA with ribosomes. tmRNA and SmpB together mimic tRNA shape, replacing the anticodon stem-loop with SmpB. tmRNA is encoded by the ssrA gene; the 2 termini fold to resemble tRNA(Ala) and it encodes a 'tag peptide', a short internal open reading frame. During trans-translation Ala-aminoacylated tmRNA acts like a tRNA, entering the A-site of stalled ribosomes, displacing the stalled mRNA. The ribosome then switches to translate the ORF on the tmRNA; the nascent peptide is terminated with the 'tag peptide' encoded by the tmRNA and targeted for degradation. The ribosome is freed to recommence translation, which seems to be the essential function of trans-translation. This is SsrA-binding protein from Acinetobacter baumannii (strain AB307-0294).